A 412-amino-acid polypeptide reads, in one-letter code: L-threonine:uridine-5'-aldehyde transaldolase (412 aa).

An N6-(pyridoxal phosphate)lysine modification is found at Lys229.

Belongs to the SHMT family. Requires pyridoxal 5'-phosphate as cofactor.

The enzyme catalyses uridine-5'-aldehyde + L-threonine = (5'S,6'S)-C-glycyluridine + acetaldehyde. It functions in the pathway antibiotic biosynthesis. Transaldolase involved in the biosynthesis of the capuramycin-type nucleoside antibiotic A-503083. Catalyzes the condensation of L-threonine and uridine-5'-aldehyde to form 5'-C-glycyluridine (GlyU). Forms (5'S,6'S)-GlyU. This chain is L-threonine:uridine-5'-aldehyde transaldolase, found in Streptomyces sp.